A 256-amino-acid polypeptide reads, in one-letter code: Dioxygenase lolE1 (256 aa).

The Fe cation site is built by His-125, Asp-127, and His-203.

It belongs to the PhyH family. In terms of assembly, homodimer. It depends on Fe cation as a cofactor.

The protein operates within alkaloid biosynthesis. Dioxygenase; part of the gene cluster that mediates the biosynthesis of loline alkaloids, potent insecticidal agents composed of a pyrrolizidine ring system and an uncommon ether bridge linking carbons 2 and 7. Lolines are structurally differentiated by the various modifications of the L-amino group and include norloline, loline, N-methylloline, N-acetylloline, N-acetylnorloline, and N-formylloline. The first committed step is the condensation of O-acetyl-L-homoserine (derived from L-aspartic acid) and L-proline, probably catalyzed by the gamma-type pyridoxal 5'-phosphate(PLP)-dependent enzyme lolC, to give the diamino diacid, NACPP. Ensuing cyclization, decarboxylation, and acetylation steps yield 1-exo-acetamidopyrrolizidine (AcAP). LolO is required for installation of the ether bridge upon the pathway intermediate, 1-exo-acetamidopyrrolizidine (AcAP). In sequential 2-oxoglutarate- and O(2)-consuming steps, lolO removes hydrogens from C2 and C7 of AcAP to form both carbon-oxygen bonds in N-acetylnorloline (NANL), the precursor to all other lolines. The enzymes lolD, lolE, lolF and lolT have also been proposed to be involved in the ether-bridge installation. Further processing of the exocyclic moiety of NANL by fungal N-acetamidase (LolN), methyltransferase (LolM), and cytochrome P450 (LolP) enzymes, with occasional involvement of a plant acetyltransferase, generates the other known lolines. LolN transforms NANL to norlonine which is monomethylated and dimethylated to respectively lonine and N-methyllonine (NML) by lolM. LolP catalyzes hydroxylation of the methyl group in N-methylloline (NML) and further oxygenation to N-formylloline (NFL). A plant acetyltransferase is responsible for the acetylation of loline to form N-acetylloline (NAL). LolA might interact with aspartate kinase to prevent feedback inhibition of its activity by these end products and thereby promote production of L-homoserine from L-aspartate. This Epichloe uncinata (Endophyte fungus) protein is Dioxygenase lolE1.